A 342-amino-acid polypeptide reads, in one-letter code: MDILKSEILRKRQLVEDRNLLVENKKYFKRSELARKEEEAYYERCGYKIQPKEDDQKPLTSSNPVLELELAEEKLPMTLSRQEVIRRLRERGEPIRLFGETDYDAFQRLRKIEILTPEVNKGLRNDLKAALDKIDQQYLNEIVGGQEPGEEDTQNDLKVHEENTTIEELEALGESLGKGDDHKDMDIITKFLKFLLGVWAKELNAREDYVKRSVQGKLNSATQKQTESYLRPLFRKLRKRNLPADIKESITDIIKFMLQREYVKANDAYLQMAIGNAPWPIGVTMVGIHARTGREKIFSKHVAHVLNDETQRKYIQGLKRLMTICQKHFPTDPSKCVEYNAL.

An N-acetylmethionine modification is found at M1.

Belongs to the PRP18 family. As to quaternary structure, heterodimer with PPIH. Interacts with PRPF4 and with the spliceosome. Part of a complex containing U4/U6 snRNPs.

The protein localises to the nucleus speckle. Participates in the second step of pre-mRNA splicing. This chain is Pre-mRNA-splicing factor 18 (Prpf18), found in Mus musculus (Mouse).